Here is a 1495-residue protein sequence, read N- to C-terminus: Nuclear pore complex protein NUP160 (1495 aa).

As to quaternary structure, part of the nuclear pore complex (NPC). The NPC has an eight-fold symmetrical structure comprising a central transport channel and two rings, the cytoplasmic and nuclear rings, to which eight filaments are attached. The cytoplasmic filaments have loose ends, while the nuclear filaments are joined in a distal ring, forming a nuclear basket. NPCs are highly dynamic in configuration and composition, and can be devided in 3 subcomplexes, the NUP62 subcomplex, the NUP107-160 subcomplex and the NUP93 subcomplex, containing approximately 30 different nucleoporin proteins. In terms of tissue distribution, expressed in roots, stems, anthers, siliques and vascular tissues of cotyledons, leaves and hypocotyls.

It localises to the nucleus membrane. It is found in the nucleus. The protein localises to the nuclear pore complex. Contributes to the transfer of mature mRNA from the nucleus to the cytosol. Required for both R gene-mediated and basal disease resistance. RNA export seems to play a critical role in stress responses and regulation of plant growth and development. Required for proper expression of factors associated with auxin signaling. This is Nuclear pore complex protein NUP160 from Arabidopsis thaliana (Mouse-ear cress).